Consider the following 2327-residue polypeptide: Voltage-dependent N-type calcium channel subunit alpha-1B (2327 aa).

The tract at residues Met-1–Leu-37 is disordered. The Cytoplasmic portion of the chain corresponds to Met-1–Arg-90. Gly residues predominate over residues Gly-10–Leu-37. Arg-22 is modified (omega-N-methylarginine). One copy of the I repeat lies at Asn-82–Phe-359. The chain crosses the membrane as a helical span at residues Ile-91–Leu-114. Residues Glu-115–Asp-131 lie on the Extracellular side of the membrane. The helical transmembrane segment at Asp-132 to Leu-152 threads the bilayer. The Cytoplasmic segment spans residues Gly-153–Arg-163. The helical transmembrane segment at Asn-164 to Ala-182 threads the bilayer. The Extracellular portion of the chain corresponds to Gly-183–Asp-187. Residues Leu-188–Val-211 form a helical membrane-spanning segment. Over Val-212–Val-221 the chain is Cytoplasmic. A helical membrane pass occupies residues Pro-222–Phe-244. Over Tyr-245–Trp-331 the chain is Extracellular. Residue Asn-256 is glycosylated (N-linked (GlcNAc...) asparagine). The helical transmembrane segment at Asn-332–Ser-356 threads the bilayer. The Cytoplasmic portion of the chain corresponds to Gly-357–Gln-482. The binding to the beta subunit stretch occupies residues Gln-379 to Glu-396. Phosphoserine is present on Ser-411. Ala-451 to Thr-458 serves as a coordination point for ATP. An II repeat occupies Glu-468–Leu-712. The chain crosses the membrane as a helical span at residues Ser-483–Met-501. At Val-502–Thr-511 the chain is on the extracellular side. The helical transmembrane segment at Thr-512–Tyr-534 threads the bilayer. Over Gly-535 to Ser-544 the chain is Cytoplasmic. Ser-544 contributes to the a 1,2-diacyl-sn-glycero-3-phospho-(1D-myo-inositol-4,5-bisphosphate) binding site. The helical transmembrane segment at Ser-545–Ile-566 threads the bilayer. Residues Lys-567–Gly-573 are Extracellular-facing. A helical membrane pass occupies residues Ile-574–Phe-586. A 1,2-diacyl-sn-glycero-3-phospho-(1D-myo-inositol-4,5-bisphosphate) is bound by residues Arg-584 and Lys-587. Over Lys-587–Asn-604 the chain is Cytoplasmic. Residues Ser-605–Leu-630 traverse the membrane as a helical segment. Over Phe-631 to Gly-682 the chain is Extracellular. The helical transmembrane segment at Met-683–Val-709 threads the bilayer. Topologically, residues Asp-710–Tyr-1140 are cytoplasmic. Residues Ser-745, Ser-748, and Ser-783 each carry the phosphoserine modification. Disordered regions lie at residues Thr-802–His-1015 and Glu-1042–Thr-1066. Composition is skewed to basic and acidic residues over residues Val-805–Leu-826, Glu-869–Ala-885, Gly-914–Pro-924, Gly-961–Thr-972, and Pro-988–His-1015. Residues Gln-1050–Thr-1066 show a composition bias toward polar residues. Ser-1058 bears the Phosphoserine mark. The III repeat unit spans residues Asn-1126–Phe-1412. A helical membrane pass occupies residues Phe-1141 to Glu-1159. Over Asp-1160–Phe-1167 the chain is Extracellular. The helical transmembrane segment at Arg-1168–Ile-1192 threads the bilayer. Topologically, residues Asp-1193–Asp-1206 are cytoplasmic. Residues Leu-1207 to Gly-1231 form a helical membrane-spanning segment. Residues Ser-1232 to Ile-1237 are Extracellular-facing. The chain crosses the membrane as a helical span at residues Asn-1238–Leu-1258. Over Pro-1259–Leu-1276 the chain is Cytoplasmic. Residues Asn-1277–Leu-1296 form a helical membrane-spanning segment. The Extracellular portion of the chain corresponds to Phe-1297–Met-1383. Residues Glu-1384–Ile-1409 traverse the membrane as a helical segment. Topologically, residues Ile-1410–Pro-1464 are cytoplasmic. The IV repeat unit spans residues Asn-1449–Phe-1702. The chain crosses the membrane as a helical span at residues Pro-1465–Met-1483. Over Lys-1484 to Glu-1491 the chain is Extracellular. The chain crosses the membrane as a helical span at residues Tyr-1492–Ile-1516. The Cytoplasmic segment spans residues Ala-1517 to Asp-1526. The helical transmembrane segment at Ala-1527–Ile-1548 threads the bilayer. Residues Ala-1549 to Asn-1554 are Extracellular-facing. Asn-1554 carries N-linked (GlcNAc...) asparagine glycosylation. Residues Leu-1555 to Gly-1573 form a helical membrane-spanning segment. The Cytoplasmic portion of the chain corresponds to Tyr-1574–Tyr-1592. The chain crosses the membrane as a helical span at residues Val-1593 to Phe-1612. Over Gly-1613–Phe-1674 the chain is Extracellular. Asn-1666 is a glycosylation site (N-linked (GlcNAc...) asparagine). A helical membrane pass occupies residues Ala-1675–Ile-1698. The Cytoplasmic segment spans residues Met-1699 to Cys-2327. One can recognise an EF-hand domain in the interval His-1715–Pro-1750. Residues Asp-1728, Arg-1734, and Asp-1739 each coordinate Ca(2+). The segment at Thr-1972–Thr-2193 is disordered. Over residues Ser-2039 to Lys-2053 the composition is skewed to basic residues. Ser-2056 is subject to Phosphoserine. Positions Cys-2088–Gln-2104 are enriched in basic and acidic residues. Polar residues-rich tracts occupy residues Pro-2131–Thr-2141 and Gly-2152–Ser-2168. 3 positions are modified to phosphoserine: Ser-2212, Ser-2221, and Ser-2244. 2 disordered regions span residues Glu-2230 to Gly-2249 and Ala-2273 to Ser-2292. Residues Ser-2276 to Ser-2292 are compositionally biased toward low complexity.

This sequence belongs to the calcium channel alpha-1 subunit (TC 1.A.1.11) family. CACNA1B subfamily. As to quaternary structure, multisubunit complex consisting of alpha-1, alpha-2, beta and delta subunits in a 1:1:1:1 ratio. The channel activity is directed by the pore-forming and voltage-sensitive alpha-1 subunit. In many cases, this subunit is sufficient to generate voltage-sensitive calcium channel activity. The auxiliary subunits beta and alpha-2/delta linked by a disulfide bridge regulate the channel activity. Interacts with RIMS1. Interacts with FMR1 (via C-terminus); this interaction induces a decrease in the number of presynaptic functional CACNA1B channels at the cell surface. Phosphorylated in vitro by CaM-kinase II, PKA, PKC and CGPK. In terms of tissue distribution, widespread expression throughout the brain. Highest levels in pyramidal cell layers C1, C2 and C3 of the hippocampus, in the dentate gyrus, in the cortex layers 2 et 4, in the subiculum and the habenula.

It localises to the membrane. It carries out the reaction Ca(2+)(in) = Ca(2+)(out). With respect to regulation, is specifically blocked by omega-conotoxin GVIA. Is specifically blocked by omega-conotoxin MVIIA (ziconotide). Is insensitive to dihydropyridines (DHP). Its function is as follows. Voltage-sensitive calcium channels (VSCC) mediate the entry of calcium ions into excitable cells and are also involved in a variety of calcium-dependent processes, including muscle contraction, hormone or neurotransmitter release, gene expression, cell motility, cell division and cell death. This alpha-1B subunit gives rise to N-type calcium currents. N-type calcium channels belong to the 'high-voltage activated' (HVA) group. They are involved in pain signaling. Calcium channels containing alpha-1B subunit may play a role in directed migration of immature neurons. Mediates Ca(2+) release probability at hippocampal neuronal soma and synaptic terminals. The polypeptide is Voltage-dependent N-type calcium channel subunit alpha-1B (Cacna1b) (Mus musculus (Mouse)).